The following is a 378-amino-acid chain: Chaperone protein DnaJ (378 aa).

In terms of domain architecture, J spans 5-70 (DYYEVLGVAK…QKRAAYDQYG (66 aa)). The segment at 138–216 (GYDTQIRVPS…CHGSGKVKET (79 aa)) adopts a CR-type zinc-finger fold. Zn(2+) is bound by residues Cys151, Cys154, Cys168, Cys171, Cys190, Cys193, Cys204, and Cys207. 4 CXXCXGXG motif repeats span residues 151–158 (CEVCHGSG), 168–175 (CPTCHGQG), 190–197 (CPKCHGTG), and 204–211 (CVHCHGSG).

It belongs to the DnaJ family. Homodimer. Zn(2+) is required as a cofactor.

It localises to the cytoplasm. In terms of biological role, participates actively in the response to hyperosmotic and heat shock by preventing the aggregation of stress-denatured proteins and by disaggregating proteins, also in an autonomous, DnaK-independent fashion. Unfolded proteins bind initially to DnaJ; upon interaction with the DnaJ-bound protein, DnaK hydrolyzes its bound ATP, resulting in the formation of a stable complex. GrpE releases ADP from DnaK; ATP binding to DnaK triggers the release of the substrate protein, thus completing the reaction cycle. Several rounds of ATP-dependent interactions between DnaJ, DnaK and GrpE are required for fully efficient folding. Also involved, together with DnaK and GrpE, in the DNA replication of plasmids through activation of initiation proteins. The polypeptide is Chaperone protein DnaJ (Burkholderia lata (strain ATCC 17760 / DSM 23089 / LMG 22485 / NCIMB 9086 / R18194 / 383)).